We begin with the raw amino-acid sequence, 98 residues long: Competence protein ComGC (98 aa).

The propeptide occupies 1–5 (MNEKG). Residues 4-29 (KGFTLVEMLIVLFIISILLLITIPNV) are may be involved in polymerization of ComGC. Phe-6 carries the post-translational modification N-methylphenylalanine. A helical transmembrane segment spans residues 6–26 (FTLVEMLIVLFIISILLLITI). Cysteines 41 and 81 form a disulfide.

It belongs to the ComGC family. As to quaternary structure, the transformation pili are flexible filaments, consisting mainly of the major pilin ComGC and smaller amounts of the minor pilins, including at least ComGD, ComGF and ComGG. Homodimer. Forms higher-order multimers. Interacts with ComGG; the interaction is probably direct. In terms of processing, processing of ComGC in competent cells requires ComC, while stabilization, possibly by formation of a disulfide bond, requires BdbC and BdbD.

It localises to the cell membrane. Its subcellular location is the cell surface. It is found in the fimbrium. Major component of the type IV-like pilus (T4P) that plays a role in transformation. Transformation pili are dynamically extended and retracted, perhaps thereby promoting DNA uptake and transformation. Required for transformation and DNA binding. This chain is Competence protein ComGC (comGC), found in Bacillus subtilis (strain 168).